Reading from the N-terminus, the 526-residue chain is Opine oxidase subunit A (526 aa).

Positions 396, 398, 431, and 436 each coordinate [2Fe-2S] cluster.

This sequence to T-protein and to dimethylglycine dehydrogenase. As to quaternary structure, heterodimer of a subunit A and a subunit B. [2Fe-2S] cluster serves as cofactor.

The protein operates within opine metabolism; octopine degradation. Its function is as follows. Oxidative cleavage of octopine into L-arginine and pyruvate. The polypeptide is Opine oxidase subunit A (ooxA) (Rhizobium meliloti (Ensifer meliloti)).